Here is a 238-residue protein sequence, read N- to C-terminus: Capsular polysaccharide phosphotransferase eps5J (238 aa).

The protein belongs to the stealth family.

The polypeptide is Capsular polysaccharide phosphotransferase eps5J (eps5J) (Streptococcus thermophilus).